A 327-amino-acid polypeptide reads, in one-letter code: Malate dehydrogenase (327 aa).

11-17 (GAAGNIS) provides a ligand contact to NAD(+). Residues Arg92 and Arg98 each coordinate substrate. NAD(+) contacts are provided by residues Asn105, Gln112, and 129–131 (VGN). Residues Asn131 and Arg162 each coordinate substrate. The active-site Proton acceptor is the His187. Positions 304–327 (SQEKMKATEQELSEERDAVEHLLP) are disordered.

Belongs to the LDH/MDH superfamily. MDH type 2 family.

It carries out the reaction (S)-malate + NAD(+) = oxaloacetate + NADH + H(+). Its function is as follows. Catalyzes the reversible oxidation of malate to oxaloacetate. The sequence is that of Malate dehydrogenase from Psychrobacter sp. (strain PRwf-1).